The primary structure comprises 112 residues: UPF0342 protein STH1710 (112 aa).

It belongs to the UPF0342 family.

In Symbiobacterium thermophilum (strain DSM 24528 / JCM 14929 / IAM 14863 / T), this protein is UPF0342 protein STH1710.